The primary structure comprises 266 residues: NIVFDVENATPETYSSFLTSLREAVKDKKSTCHGMIMATTTTELPKYVLVDLKLGSEKDAKTFTLAIRRGNLYLEGYSDIYNEKCRYRIFEDSESDAQQTVCPGDLTLPGSQNKIPYKKSYQSMESKGGDRTKLGLGQITLESRMNKIYGKDATDQKQFQKNEAEFLLIAVQMITEASRFKYIENKVKDSFDDAIGYKPDPKAISLETSWDKISNAIAKVNTPGNSIVTLPKGLLDENKKPWTTATMDELKNDIMGLLTHVTCKIK.

Cystine bridges form between Cys32–Cys263 and Cys85–Cys102. Residue Glu176 is part of the active site.

It is found in the secreted. Its subcellular location is the extracellular space. It localises to the golgi apparatus. The protein resides in the vacuole. The catalysed reaction is Endohydrolysis of the N-glycosidic bond at one specific adenosine on the 28S rRNA.. Its function is as follows. Nicks pBR322 dsDNA. Has adenine polynucleotide glycosidase activity on herring sperm ssDNA. The sequence is that of Dioicin-2 from Phytolacca dioica (Bella sombra tree).